The primary structure comprises 440 residues: 5-hydroxytryptamine receptor 6 (440 aa).

Over 1 to 27 the chain is Extracellular; the sequence is MVPEPGPVNSSTPAWGPGPPPAPGGSG. N-linked (GlcNAc...) asparagine glycosylation occurs at Asn-9. A helical transmembrane segment spans residues 28–52; that stretch reads WVAAALCVVIVLTAAANSLLIALIC. At 53-62 the chain is on the cytoplasmic side; the sequence is TQPALRNTSN. A helical transmembrane segment spans residues 63 to 88; that stretch reads FFLVSLFTSDLMVGLVVMPPAMLNAL. The Extracellular segment spans residues 89–96; sequence YGRWVLAR. The helical transmembrane segment at 97–122 threads the bilayer; it reads GLCLLWTAFDVMCCSASILNLCLISL. Cys-99 and Cys-180 are disulfide-bonded. Asp-106 contributes to the serotonin binding site. At 123–142 the chain is on the cytoplasmic side; it reads DRYLLILSPLRYKLRMTAPR. A helical membrane pass occupies residues 143 to 167; it reads ALALILGAWSLAALASFLPLLLGWH. Topologically, residues 168 to 185 are extracellular; it reads ELGKARTSAPGQCRLLAS. A helical transmembrane segment spans residues 186–209; that stretch reads LPYVLVASGVTFFLPSGAICFTYC. The Cytoplasmic portion of the chain corresponds to 210–268; the sequence is RILLAARKQAVQVASLTTGTATAGQALETLQVPRTPRPGMESADSRRLTTKHSRKALKA. Residues 269–295 form a helical membrane-spanning segment; that stretch reads SLTLGILLSMFFVTWLPFFVASIAQAV. Over 296 to 301 the chain is Extracellular; the sequence is CDCISP. A helical transmembrane segment spans residues 302-325; sequence GLFDVLTWLGYCNSTMNPIIYPLF. At 326 to 440 the chain is on the cytoplasmic side; it reads MRDFKRALGR…RQHPLGSPMN (115 aa).

It belongs to the G-protein coupled receptor 1 family. Interacts with CDK5. Interacts with MTOR. Interacts with RPTOR and NF1.

It localises to the cell membrane. G-protein coupled receptor for 5-hydroxytryptamine (serotonin), a biogenic hormone that functions as a neurotransmitter, a hormone and a mitogen. Also has a high affinity for tricyclic psychotropic drugs. Ligand binding causes a conformation change that triggers signaling via guanine nucleotide-binding proteins (G proteins) and modulates the activity of downstream effectors. HTR6 is coupled to G(s) G alpha proteins and mediates activation of adenylate cyclase activity. Controls pyramidal neurons migration during corticogenesis, through the regulation of CDK5 activity. Is an activator of mTOR signaling. This is 5-hydroxytryptamine receptor 6 from Mus musculus (Mouse).